The following is a 455-amino-acid chain: MGSRDFISSLPDEVLGKKILSLLPTKLVVSTSVLSKRWRNLFHFVDSFDLEDSTPIRNADSFSDFMKDTVALLSNCPIKRLTLNSHYEKSSVNRWIRSALKRGCLELNLQSQYDHYLDIGIFFRNNTLVKLTLSSYRTFLRGNVPPEGRVFFPALKTLSLGAVVAKPALYNWLISGCPVLEELFILDVGSGDDQPTWTRSVVSASIKRLTIVFHFPHNTYPYEDDVEIKTPNLEFLDYSALRSDGSDVDYLDSLAEARLDLRLWELTNTFDFGEVTNLVSAIRNVKTLHLSSSSLEAFYYRCYTMPVFDKLIHLSIESDKENGWQALPRLLLKSPNLQTLAIKGLLHKVTYRCGNACACTSKPKKRYLYKRYEDDSPTSEVEGRCCLSTCRVKVLEISGYGGSLREVKQMEHFLRKLKYLETVKIGVEEDNDSEHLRTELMTLDIASSKCNIQFI.

One can recognise an F-box domain in the interval 4 to 51; sequence RDFISSLPDEVLGKKILSLLPTKLVVSTSVLSKRWRNLFHFVDSFDLE. 5 LRR repeats span residues 114-138, 152-176, 282-305, 308-324, and 325-348; these read DHYL…SYRT, FPAL…LISG, IRNV…CYTM, FDKL…ENGW, and QALP…LLHK.

The sequence is that of F-box/LRR-repeat protein At5g35995 from Arabidopsis thaliana (Mouse-ear cress).